A 682-amino-acid polypeptide reads, in one-letter code: MIDRYKHQQLQIGSVSPQQISAWANKILPNGEIVGEVTKPYTFHYKTNKPEKDGLFCERIFGPIKSGICACGNYRVIGAEKEDPKFCEQCGVEFIDSRIRRYQMGYIKLACPVTHVWYLKRLPSYIANLLDKPLKELEGLVYCDFSFARPIAKKPTFLRLRGLFEYEIQSWKYSIPLFFTTQGFDTFRNREISTGAGAIREQLADLDLRIVIDNSSVEWKELGDEGSTGNEWEDRKIGRRKDFLVRRMELAKHFIRTNVEPERMVLCLLPVLPPELRPIIQIDGGKLMSSDINELYRRVIYRNNTLTDLLKTSRSTPGELVMCQEKLVQEAVDTLLDNGIRGQPMRDGHNKVYKSFSDVIEGKEGRFRETLLGKRVDYSGRSVIVVGPSLSLHRCGLPREIAIELFQTFVIRGLIRQHLASNIGIAKSKIREKEPIVWEILQEVMQGHPVLLNRAPTLHRLGIQAFQPVLVEGRAICLHPLVCKGFNADFDGDQMAVHVPLSLEAQAEARLLMFSHMNLLSPAIGDPISVPTQDMLIGLYVLTMGNHRGIFVNRYNPCNRRNYQNKTVDNNNYKHTKEKKPYFFSSYDALGAYQQKRINLHRPLWLRWRLDQRVIGSREVPIEVQYESLGTYQEIYGHYLIVRSVKKEILCIYIRTTVGHISFYREIEESVQGFCRAYSYGT.

Positions 69, 71, 87, and 90 each coordinate Zn(2+). The Mg(2+) site is built by Asp-489, Asp-491, and Asp-493.

It belongs to the RNA polymerase beta' chain family. RpoC1 subfamily. In terms of assembly, in plastids the minimal PEP RNA polymerase catalytic core is composed of four subunits: alpha, beta, beta', and beta''. When a (nuclear-encoded) sigma factor is associated with the core the holoenzyme is formed, which can initiate transcription. The cofactor is Mg(2+). Zn(2+) is required as a cofactor.

The protein resides in the plastid. The protein localises to the chloroplast. It carries out the reaction RNA(n) + a ribonucleoside 5'-triphosphate = RNA(n+1) + diphosphate. Its function is as follows. DNA-dependent RNA polymerase catalyzes the transcription of DNA into RNA using the four ribonucleoside triphosphates as substrates. This Acorus gramineus (Dwarf sweet flag) protein is DNA-directed RNA polymerase subunit beta'.